Consider the following 152-residue polypeptide: Superoxide dismutase [Cu-Zn] (152 aa).

Cu cation is bound by residues His45, His47, and His62. Cysteines 56 and 145 form a disulfide. Zn(2+)-binding residues include His62, His70, His79, and Asp82. His119 contributes to the Cu cation binding site.

The protein belongs to the Cu-Zn superoxide dismutase family. Homodimer. Cu cation is required as a cofactor. It depends on Zn(2+) as a cofactor.

The protein resides in the cytoplasm. The catalysed reaction is 2 superoxide + 2 H(+) = H2O2 + O2. Its function is as follows. Destroys radicals which are normally produced within the cells and which are toxic to biological systems. The chain is Superoxide dismutase [Cu-Zn] (SODCC) from Spinacia oleracea (Spinach).